The primary structure comprises 294 residues: 4-hydroxy-tetrahydrodipicolinate synthase (294 aa).

Thr-47 contributes to the pyruvate binding site. Tyr-136 acts as the Proton donor/acceptor in catalysis. Catalysis depends on Lys-164, which acts as the Schiff-base intermediate with substrate. Val-206 serves as a coordination point for pyruvate.

This sequence belongs to the DapA family. In terms of assembly, homotetramer; dimer of dimers.

Its subcellular location is the cytoplasm. The enzyme catalyses L-aspartate 4-semialdehyde + pyruvate = (2S,4S)-4-hydroxy-2,3,4,5-tetrahydrodipicolinate + H2O + H(+). It functions in the pathway amino-acid biosynthesis; L-lysine biosynthesis via DAP pathway; (S)-tetrahydrodipicolinate from L-aspartate: step 3/4. Catalyzes the condensation of (S)-aspartate-beta-semialdehyde [(S)-ASA] and pyruvate to 4-hydroxy-tetrahydrodipicolinate (HTPA). This Nostoc sp. (strain PCC 7120 / SAG 25.82 / UTEX 2576) protein is 4-hydroxy-tetrahydrodipicolinate synthase.